The following is a 372-amino-acid chain: Alpha-parvin (372 aa).

Residues 1 to 11 (MATSPQKSPSV) show a composition bias toward low complexity. The disordered stretch occupies residues 1 to 44 (MATSPQKSPSVPKSPTPKSPPSRKKDDSFLGKLGGTLARRKKAK). An N-acetylalanine modification is found at A2. Residues S8, S14, and S19 each carry the phosphoserine modification. The interaction with ARHGAP31 stretch occupies residues 21-25 (PSRKK). S28 and S62 each carry phosphoserine. Calponin-homology (CH) domains lie at 95–202 (QELM…QYFR) and 262–369 (NVVK…TKYR). Residues 223-372 (GILQSRQIQE…NLFTKYRNVE (150 aa)) are required for interaction with TESK1 and ILK.

Belongs to the parvin family. In terms of assembly, component of the heterotrimeric IPP (ILK-PINCH-PARVIN) complex composed of ILK, LIMS1/PINCH and PARVA; the complex binds to F-actin via the C-terminal tail of LIMS1 and the N-terminal region of PARVA, promoting F-actin filament bundling. Interacts with TGFB1I1. Interacts with ARHGAP31. Interacts with the actin cytoskeleton. Interacts (via C-terminus) with TESK1 (via C-terminus); the interaction inhibits TESK1 kinase activity. Interacts with PXN/PAXILLIN (via LD motif 4). Widely expressed.

The protein localises to the cell junction. Its subcellular location is the focal adhesion. The protein resides in the cell membrane. It is found in the cytoplasm. It localises to the cytoskeleton. The protein localises to the myofibril. Its subcellular location is the sarcomere. The protein resides in the z line. Plays a role in sarcomere organization and in smooth muscle cell contraction. Required for normal development of the embryonic cardiovascular system, and for normal septation of the heart outflow tract. Plays a role in sprouting angiogenesis and is required for normal adhesion of vascular smooth muscle cells to endothelial cells during blood vessel development. Plays a role in the reorganization of the actin cytoskeleton, formation of lamellipodia and ciliogenesis. Plays a role in the establishment of cell polarity, cell adhesion, cell spreading, and directed cell migration. Within the IPP (ILK-PINCH-PARVIN) complex, binds to F-actin, promoting F-actin bundling, a process required to generate force for actin cytoskeleton reorganization and subsequent dynamic cell adhesion events such as cell spreading and migration. This chain is Alpha-parvin (Parva), found in Rattus norvegicus (Rat).